The chain runs to 172 residues: C-phycocyanin beta subunit (172 aa).

At asparagine 72 the chain carries N4-methylasparagine. (2R,3E)-phycocyanobilin contacts are provided by cysteine 82 and cysteine 153.

Belongs to the phycobiliprotein family. As to quaternary structure, heterodimer of an alpha and a beta chain, which further assembles into trimers. The trimers assemble into hexamers, although these were not seen in the crystallographic studies. Part of 2 PBS rod complexes, the conventional CpcG-PBS rod and a photosystem I-specific CpcL-PBS rod, both of which include ferredoxin--NADP reductase (petH). Interacts with rod linker CpcC2 via the latter's N-terminal PBS-linker domain. In terms of processing, contains two covalently linked bilin chromophores.

It is found in the cellular thylakoid membrane. Light-harvesting photosynthetic bile pigment-protein from the phycobiliprotein complex (phycobilisome, PBS). Phycocyanin is the major phycobiliprotein in the PBS rod. The sequence is that of C-phycocyanin beta subunit (cpcB) from Synechocystis sp. (strain ATCC 27184 / PCC 6803 / Kazusa).